The following is a 764-amino-acid chain: uncharacterized protein (764 aa).

The Lumenal segment spans residues 1-646; the sequence is MKEENGFAGF…LTKLYTFPFT (646 aa). Residues 22–173 form a disordered region; it reads LNDTAPTKSQ…SAITAPSRKV (152 aa). The N-linked (GlcNAc...) asparagine glycan is linked to Asn23. Polar residues-rich tracts occupy residues 25–41 and 61–82; these read TAPTKSQSLKNGVNNEG and SEASSHSTLGQQQARDGRQSPS. At Ser80 the chain carries Phosphoserine. Positions 98–113 are enriched in acidic residues; sequence ENQENEADEAENEETS. N-linked (GlcNAc...) asparagine glycosylation is present at Asn118. Over residues 118–145 the composition is skewed to basic and acidic residues; that stretch reads NHTENTEEIAEESRPLERTHSGSNHHEA. The segment covering 158-173 has biased composition (polar residues); that stretch reads NTLSQGSAITAPSRKV. The GRAM domain maps to 197–264; the sequence is RDFHRIFKVL…TEIVSVEKKS (68 aa). N-linked (GlcNAc...) asparagine glycans are attached at residues Asn240 and Asn330. The disordered stretch occupies residues 320-406; that stretch reads ASGNHHSGSS…DGNSVKKMNE (87 aa). The segment covering 321 to 330 has biased composition (low complexity); sequence SGNHHSGSSN. A compositionally biased stretch (polar residues) spans 331 to 340; it reads QSINADSSAG. The span at 352-371 shows a compositional bias: acidic residues; the sequence is ANDESSEDDDEDNNTDEANE. N-linked (GlcNAc...) asparagine glycans are attached at residues Asn364 and Asn376. A compositionally biased stretch (polar residues) spans 389–399; that stretch reads HSDNVVLSDGN. Residues 432-598 enclose the VASt domain; that stretch reads LAHVLCSDVV…AFENYKVSPK (167 aa). Residues Asn442 and Asn554 are each glycosylated (N-linked (GlcNAc...) asparagine). Over residues 598–613 the composition is skewed to basic residues; that stretch reads KGRRKKITKHTKKKNK. Residues 598-626 are disordered; sequence KGRRKKITKHTKKKNKHASETSVAPEKVD. The N-linked (GlcNAc...) asparagine glycan is linked to Asn627. Residues 647 to 667 form a helical membrane-spanning segment; it reads IITWLMHPTHLLLVVMFSMLV. The Cytoplasmic segment spans residues 668-764; the sequence is LQWWYMQQIL…LRKLEASGYI (97 aa).

This sequence belongs to the YSP2 family.

Its subcellular location is the membrane. This is an uncharacterized protein from Schizosaccharomyces pombe (strain 972 / ATCC 24843) (Fission yeast).